We begin with the raw amino-acid sequence, 439 residues long: ATP-dependent protease ATPase subunit HslU (439 aa).

Residues I17, G59–E64, D251, E317, and R389 contribute to the ATP site.

Belongs to the ClpX chaperone family. HslU subfamily. As to quaternary structure, a double ring-shaped homohexamer of HslV is capped on each side by a ring-shaped HslU homohexamer. The assembly of the HslU/HslV complex is dependent on binding of ATP.

The protein resides in the cytoplasm. Its function is as follows. ATPase subunit of a proteasome-like degradation complex; this subunit has chaperone activity. The binding of ATP and its subsequent hydrolysis by HslU are essential for unfolding of protein substrates subsequently hydrolyzed by HslV. HslU recognizes the N-terminal part of its protein substrates and unfolds these before they are guided to HslV for hydrolysis. This chain is ATP-dependent protease ATPase subunit HslU, found in Campylobacter jejuni subsp. doylei (strain ATCC BAA-1458 / RM4099 / 269.97).